The sequence spans 163 residues: Nucleotide-binding protein YajQ (163 aa).

It belongs to the YajQ family.

Its function is as follows. Nucleotide-binding protein. The polypeptide is Nucleotide-binding protein YajQ (Salmonella paratyphi A (strain ATCC 9150 / SARB42)).